The chain runs to 132 residues: MIVGLGTDIAEIERIEQKVPAAGDIKGLESCRLAKRVLTEPEMAIFIASKQPARYLAKRFAAKEAAAKALGTGIGRGVSFQHIEISNDTNGAPLISFNGGAADRLASLGGARAHISIADEKHYATATVILES.

2 residues coordinate Mg(2+): Asp8 and Glu64.

It belongs to the P-Pant transferase superfamily. AcpS family. Requires Mg(2+) as cofactor.

Its subcellular location is the cytoplasm. The catalysed reaction is apo-[ACP] + CoA = holo-[ACP] + adenosine 3',5'-bisphosphate + H(+). Its function is as follows. Transfers the 4'-phosphopantetheine moiety from coenzyme A to a Ser of acyl-carrier-protein. This chain is Holo-[acyl-carrier-protein] synthase, found in Shewanella woodyi (strain ATCC 51908 / MS32).